A 682-amino-acid chain; its full sequence is Heat shock 70 kDa protein 10, mitochondrial (682 aa).

The N-terminal 50 residues, 1 to 50 (MATAALLRSIRRREVVSSPFSAYRCLSSSGKASLNSSYLGQNFRSFSRAF), are a transit peptide targeting the mitochondrion. The disordered stretch occupies residues 646–682 (KIGEHMSGGSGGGSAPGGGSEGGSDQAPEAEYEEVKK). Over residues 651–667 (MSGGSGGGSAPGGGSEG) the composition is skewed to gly residues. The span at 673 to 682 (PEAEYEEVKK) shows a compositional bias: acidic residues.

This sequence belongs to the heat shock protein 70 (TC 1.A.33) family. DnaK subfamily.

Its subcellular location is the mitochondrion. Chaperone involved in the maturation of iron-sulfur [Fe-S] cluster-containing proteins. Has a low intrinsic ATPase activity which is markedly stimulated by HSCB and ISU1. In cooperation with other chaperones, Hsp70s are key components that facilitate folding of de novo synthesized proteins, assist translocation of precursor proteins into organelles, and are responsible for degradation of damaged protein under stress conditions. The polypeptide is Heat shock 70 kDa protein 10, mitochondrial (Arabidopsis thaliana (Mouse-ear cress)).